The following is a 617-amino-acid chain: Glutamyl-tRNA(Gln) amidotransferase subunit B, mitochondrial (617 aa).

The transit peptide at 1 to 56 directs the protein to the mitochondrion; the sequence is MPRIPTSVLGKYLLSGQISRQGCVGARQITRHSALPSAAVSVANSARLLHVSSETV. The disordered stretch occupies residues 53–90; sequence SETVPPPPAQPVPLRKQLKDEAKKAKKQGKKKSKGDSQ. Residues 76–85 are compositionally biased toward basic residues; that stretch reads KAKKQGKKKS.

The protein belongs to the GatB/GatE family. GatB subfamily. As to quaternary structure, subunit of the heterotrimeric GatCAB amidotransferase (AdT) complex, composed of A, B and C subunits.

It is found in the mitochondrion. The catalysed reaction is L-glutamyl-tRNA(Gln) + L-glutamine + ATP + H2O = L-glutaminyl-tRNA(Gln) + L-glutamate + ADP + phosphate + H(+). Its function is as follows. Allows the formation of correctly charged Gln-tRNA(Gln) through the transamidation of misacylated Glu-tRNA(Gln) in the mitochondria. The reaction takes place in the presence of glutamine and ATP through an activated gamma-phospho-Glu-tRNA(Gln). The chain is Glutamyl-tRNA(Gln) amidotransferase subunit B, mitochondrial from Fusarium vanettenii (strain ATCC MYA-4622 / CBS 123669 / FGSC 9596 / NRRL 45880 / 77-13-4) (Fusarium solani subsp. pisi).